The primary structure comprises 103 residues: Interleukin-8 (103 aa).

The signal sequence occupies residues 1–25 (MTSKLAVAFLAVFLLSAALCEAAVL). Citrulline is present on R27. 2 disulfide bridges follow: C34-C61 and C36-C77.

Belongs to the intercrine alpha (chemokine CxC) family. Homodimer. Interacts with TNFAIP6 (via Link domain); this interaction interferes with chemokine binding to glycosaminoglycans. In terms of processing, citrullination at Arg-27 prevents proteolysis, and dampens tissue inflammation, it also enhances leukocytosis, possibly through impaired chemokine clearance from the blood circulation. As to expression, alveolar macrophages.

The protein localises to the secreted. Its function is as follows. Chemotactic factor that mediates inflammatory response by attracting neutrophils, basophils, and T-cells to clear pathogens and protect the host from infection. Also plays an important role in neutrophil activation. Released in response to an inflammatory stimulus, exerts its effect by binding to the G-protein-coupled receptors CXCR1 and CXCR2, primarily found in neutrophils, monocytes and endothelial cells. G-protein heterotrimer (alpha, beta, gamma subunits) constitutively binds to CXCR1/CXCR2 receptor and activation by IL8 leads to beta and gamma subunits release from Galpha (GNAI2 in neutrophils) and activation of several downstream signaling pathways including PI3K and MAPK pathways. The chain is Interleukin-8 (CXCL8) from Sus scrofa (Pig).